We begin with the raw amino-acid sequence, 227 residues long: Probable proteasome subunit beta type-2 (227 aa).

The propeptide at 1–6 (MITKTG) is removed in mature form. The Nucleophile role is filled by threonine 7.

Belongs to the peptidase T1B family. As to quaternary structure, the 26S proteasome consists of a 20S proteasome core and two 19S regulatory subunits. The 20S proteasome core is composed of 28 subunits that are arranged in four stacked rings, resulting in a barrel-shaped structure. The two end rings are each formed by seven alpha subunits, and the two central rings are each formed by seven beta subunits. The catalytic chamber with the active sites is on the inside of the barrel.

The protein localises to the cytoplasm. It localises to the nucleus. The enzyme catalyses Cleavage of peptide bonds with very broad specificity.. In terms of biological role, the proteasome degrades poly-ubiquitinated proteins in the cytoplasm and in the nucleus. It is essential for the regulated turnover of proteins and for the removal of misfolded proteins. The proteasome is a multicatalytic proteinase complex that is characterized by its ability to cleave peptides with Arg, Phe, Tyr, Leu, and Glu adjacent to the leaving group at neutral or slightly basic pH. It has an ATP-dependent proteolytic activity. This chain is Probable proteasome subunit beta type-2 (PUP1), found in Encephalitozoon cuniculi (strain GB-M1) (Microsporidian parasite).